The sequence spans 350 residues: Ketol-acid reductoisomerase (NADP(+)) 2 (350 aa).

A KARI N-terminal Rossmann domain is found at alanine 3–threonine 183. Residues tyrosine 26–glutamine 29, arginine 49, serine 52, serine 54, and aspartate 84–glutamine 87 contribute to the NADP(+) site. Residue histidine 109 is part of the active site. Residue glycine 135 participates in NADP(+) binding. The 144-residue stretch at threonine 184–asparagine 327 folds into the KARI C-terminal knotted domain. Mg(2+)-binding residues include aspartate 192, glutamate 196, glutamate 228, and glutamate 232. Serine 253 provides a ligand contact to substrate. Residues alanine 331–glutamine 350 form a disordered region.

This sequence belongs to the ketol-acid reductoisomerase family. The cofactor is Mg(2+).

The enzyme catalyses (2R)-2,3-dihydroxy-3-methylbutanoate + NADP(+) = (2S)-2-acetolactate + NADPH + H(+). It carries out the reaction (2R,3R)-2,3-dihydroxy-3-methylpentanoate + NADP(+) = (S)-2-ethyl-2-hydroxy-3-oxobutanoate + NADPH + H(+). It participates in amino-acid biosynthesis; L-isoleucine biosynthesis; L-isoleucine from 2-oxobutanoate: step 2/4. It functions in the pathway amino-acid biosynthesis; L-valine biosynthesis; L-valine from pyruvate: step 2/4. Its function is as follows. Involved in the biosynthesis of branched-chain amino acids (BCAA). Catalyzes an alkyl-migration followed by a ketol-acid reduction of (S)-2-acetolactate (S2AL) to yield (R)-2,3-dihydroxy-isovalerate. In the isomerase reaction, S2AL is rearranged via a Mg-dependent methyl migration to produce 3-hydroxy-3-methyl-2-ketobutyrate (HMKB). In the reductase reaction, this 2-ketoacid undergoes a metal-dependent reduction by NADPH to yield (R)-2,3-dihydroxy-isovalerate. The sequence is that of Ketol-acid reductoisomerase (NADP(+)) 2 from Bifidobacterium longum (strain NCC 2705).